The following is a 56-amino-acid chain: UPF0339 protein NMA1193/NMA1859 (56 aa).

It belongs to the UPF0339 family.

This Neisseria meningitidis serogroup A / serotype 4A (strain DSM 15465 / Z2491) protein is UPF0339 protein NMA1193/NMA1859.